Here is a 506-residue protein sequence, read N- to C-terminus: MKEYWTSLASLLGVLAFCQSLMNSVFPPELRFAISKLFNKFFKLFSTFCYFDITEIDGVNTNELYNAVQLYLSSSVSIAGNRLSLTRAVNSSSVTFGLSNNDSIVDTFNSVTVVWEHIVTQRQTQTFAWRPMPEEKRGFTLRIKKKDKNLILDSYLDYIMEKANEIRRLNQDRLLYTNSRGGSLDSRGLPWESVPFKHPSTFDTLAMDPVKKQQIMEDLKDFAECQSFYERTGRAWKRGYLLYGPPGTGKSSMIAAMANYLRYDIYDLELTEVKSNSELRKLLMKTSSKSIIVIEDIDCSINLTNRNKKQSTGSYNEPEMLTGSGLGDDLGDGNTITLSGLLNFTDGLWSCCGSERIFVFTTNHIEKLDPALLRSGRMDMHIHMSYCTFSSVKILLRNYLGFEEGDLNDVVLKELAEVVDRAEITPADVSEALIKNRRDKERAVRELLVDLRSRVERNEKNGKSRVQNVSLEEQENRAFDSLYAEENGGEEEEIEDNICKSSDDCS.

The N-terminal stretch at 1 to 20 (MKEYWTSLASLLGVLAFCQS) is a signal peptide. 244-251 (GPPGTGKS) contacts ATP. The segment at 462-506 (GKSRVQNVSLEEQENRAFDSLYAEENGGEEEEIEDNICKSSDDCS) is disordered. Positions 487-496 (NGGEEEEIED) are enriched in acidic residues. Residues 497–506 (NICKSSDDCS) are compositionally biased toward basic and acidic residues.

Belongs to the AAA ATPase family. BCS1 subfamily. Mg(2+) is required as a cofactor.

It catalyses the reaction ATP + H2O = ADP + phosphate + H(+). The protein is AAA-ATPase At4g25835 of Arabidopsis thaliana (Mouse-ear cress).